Consider the following 384-residue polypeptide: MPPIELSQTQFEQHFGYASQQTVFAPGRVNIIGEHTDYNDGFVMPCAINYGMSVSFAKRDDSIWRVYAIDINETDAFDIKKEIPQSEDKWKNYVRGVVKYIQERCPEFIQGADIAMTSDVPMSSGLSSSAALEISIGKTCQVLGNLPISLAEIALIGQRAENKFVGANCGNMDQLTSALGQKDHLVMIDCRSLDISPTPVPQGYFIAIINSNVKHDLVTGEYNSRRQECEFAAQFFGVKALRDVSPEQFIERAAELQQLNELAYKRAKHVISENHRVLEAVEALKANDMQKLGVLMGESHDSMRDDFEITIPEIDYLVELAQVAIGKNGGARMTGGGFGGCIICLVPNEKVEALRKLIAENYQKQTGIQETFYVCTASDGVRVV.

34–37 (EHTD) serves as a coordination point for substrate. 123-129 (SSGLSSS) contacts ATP. 2 residues coordinate Mg(2+): Ser-129 and Glu-161. Asp-173 serves as the catalytic Proton acceptor. Tyr-222 provides a ligand contact to substrate.

Belongs to the GHMP kinase family. GalK subfamily.

It localises to the cytoplasm. The catalysed reaction is alpha-D-galactose + ATP = alpha-D-galactose 1-phosphate + ADP + H(+). Its pathway is carbohydrate metabolism; galactose metabolism. Functionally, catalyzes the transfer of the gamma-phosphate of ATP to D-galactose to form alpha-D-galactose-1-phosphate (Gal-1-P). The sequence is that of Galactokinase from Glaesserella parasuis serovar 5 (strain SH0165) (Haemophilus parasuis).